The sequence spans 236 residues: Demethylmenaquinone methyltransferase (236 aa).

S-adenosyl-L-methionine is bound by residues Thr58, Asp79, and 106–107 (NA).

Belongs to the class I-like SAM-binding methyltransferase superfamily. MenG/UbiE family.

The enzyme catalyses a 2-demethylmenaquinol + S-adenosyl-L-methionine = a menaquinol + S-adenosyl-L-homocysteine + H(+). It participates in quinol/quinone metabolism; menaquinone biosynthesis; menaquinol from 1,4-dihydroxy-2-naphthoate: step 2/2. Functionally, methyltransferase required for the conversion of demethylmenaquinol (DMKH2) to menaquinol (MKH2). The chain is Demethylmenaquinone methyltransferase from Alkalihalophilus pseudofirmus (strain ATCC BAA-2126 / JCM 17055 / OF4) (Bacillus pseudofirmus).